Consider the following 381-residue polypeptide: tRNA-cytidine(32) 2-sulfurtransferase (381 aa).

Positions 101–106 (SGGKDS) match the PP-loop motif motif. The [4Fe-4S] cluster site is built by Cys-176, Cys-179, and Cys-267.

The protein belongs to the TtcA family. In terms of assembly, homodimer. It depends on Mg(2+) as a cofactor. [4Fe-4S] cluster serves as cofactor.

It localises to the cytoplasm. The enzyme catalyses cytidine(32) in tRNA + S-sulfanyl-L-cysteinyl-[cysteine desulfurase] + AH2 + ATP = 2-thiocytidine(32) in tRNA + L-cysteinyl-[cysteine desulfurase] + A + AMP + diphosphate + H(+). It functions in the pathway tRNA modification. Catalyzes the ATP-dependent 2-thiolation of cytidine in position 32 of tRNA, to form 2-thiocytidine (s(2)C32). The sulfur atoms are provided by the cysteine/cysteine desulfurase (IscS) system. The polypeptide is tRNA-cytidine(32) 2-sulfurtransferase (Psychrobacter arcticus (strain DSM 17307 / VKM B-2377 / 273-4)).